The following is a 214-amino-acid chain: MRKQQIPTLSTSALDKSPGPGSPDSDIEMKSTSVKSDIDELAKLLKDKTKDGIAIFNSALKVCIENNPNALLHEAAEHGKKKLVVEILKVNRDSINSTTPQGLSVLHSAVAGVNNKKEIIEILLNEEPILVTKKDALGLTPSCYNTSTEILKILQEYERNVIDQALIKPAKYVPITPPKCLPIEVVQSNLEKAFEEYMGYKLVGQTNPTNSDEF.

Residues 1–14 (MRKQQIPTLSTSAL) show a composition bias toward polar residues. Residues 1-32 (MRKQQIPTLSTSALDKSPGPGSPDSDIEMKST) are disordered. The stretch at 67-135 (NPNALLHEAA…EEPILVTKKD (69 aa)) is one ANK repeat.

The polypeptide is Putative ankyrin repeat protein RF_1081 (Rickettsia felis (strain ATCC VR-1525 / URRWXCal2) (Rickettsia azadi)).